The sequence spans 303 residues: Methionyl-tRNA formyltransferase (303 aa).

Residue 109–112 (SLLP) coordinates (6S)-5,6,7,8-tetrahydrofolate.

Belongs to the Fmt family.

It catalyses the reaction L-methionyl-tRNA(fMet) + (6R)-10-formyltetrahydrofolate = N-formyl-L-methionyl-tRNA(fMet) + (6S)-5,6,7,8-tetrahydrofolate + H(+). Functionally, attaches a formyl group to the free amino group of methionyl-tRNA(fMet). The formyl group appears to play a dual role in the initiator identity of N-formylmethionyl-tRNA by promoting its recognition by IF2 and preventing the misappropriation of this tRNA by the elongation apparatus. The protein is Methionyl-tRNA formyltransferase of Helicobacter pylori (strain ATCC 700392 / 26695) (Campylobacter pylori).